Here is a 339-residue protein sequence, read N- to C-terminus: D-erythrose-4-phosphate dehydrogenase (339 aa).

11-12 (RI) is a binding site for NAD(+). Substrate-binding positions include 158–160 (SCT), Arg204, 217–218 (TK), and Arg240. Catalysis depends on Cys159, which acts as the Nucleophile. Asn322 is an NAD(+) binding site.

This sequence belongs to the glyceraldehyde-3-phosphate dehydrogenase family. Epd subfamily. In terms of assembly, homotetramer.

The protein localises to the cytoplasm. The enzyme catalyses D-erythrose 4-phosphate + NAD(+) + H2O = 4-phospho-D-erythronate + NADH + 2 H(+). The protein operates within cofactor biosynthesis; pyridoxine 5'-phosphate biosynthesis; pyridoxine 5'-phosphate from D-erythrose 4-phosphate: step 1/5. Functionally, catalyzes the NAD-dependent conversion of D-erythrose 4-phosphate to 4-phosphoerythronate. The chain is D-erythrose-4-phosphate dehydrogenase from Aliivibrio fischeri (strain MJ11) (Vibrio fischeri).